A 98-amino-acid polypeptide reads, in one-letter code: Small ribosomal subunit protein eS24 (98 aa).

The interval 76–98 (GRQRTERSYLLNRGEPKKEEEEA) is disordered. Over residues 89 to 98 (GEPKKEEEEA) the composition is skewed to basic and acidic residues.

This sequence belongs to the eukaryotic ribosomal protein eS24 family.

In Methanosphaerula palustris (strain ATCC BAA-1556 / DSM 19958 / E1-9c), this protein is Small ribosomal subunit protein eS24.